Reading from the N-terminus, the 31-residue chain is GDCSCEGQICKCGYRVSPGKSGCACTCRNAK.

It belongs to the conotoxin S superfamily. In terms of processing, contains 5 disulfide bonds. In terms of tissue distribution, expressed by the venom duct.

It is found in the secreted. The chain is Conotoxin from Conus striatus (Striated cone).